The following is a 421-amino-acid chain: Gamma-glutamyl phosphate reductase (421 aa).

It belongs to the gamma-glutamyl phosphate reductase family.

It localises to the cytoplasm. It catalyses the reaction L-glutamate 5-semialdehyde + phosphate + NADP(+) = L-glutamyl 5-phosphate + NADPH + H(+). It functions in the pathway amino-acid biosynthesis; L-proline biosynthesis; L-glutamate 5-semialdehyde from L-glutamate: step 2/2. Functionally, catalyzes the NADPH-dependent reduction of L-glutamate 5-phosphate into L-glutamate 5-semialdehyde and phosphate. The product spontaneously undergoes cyclization to form 1-pyrroline-5-carboxylate. The chain is Gamma-glutamyl phosphate reductase from Bordetella petrii (strain ATCC BAA-461 / DSM 12804 / CCUG 43448).